A 209-amino-acid polypeptide reads, in one-letter code: Rac-like GTP-binding protein ARAC7 (209 aa).

13–20 (GDGAVGKT) contacts GTP. Residues 35–43 (YIPTVFDNF) carry the Effector region motif. GTP-binding positions include 60–64 (DTAGQ) and 118–121 (TKLD). 3 S-palmitoyl cysteine lipidation sites follow: Cys-196, Cys-203, and Cys-206.

This sequence belongs to the small GTPase superfamily. Rho family. Although this sequence has a C-terminal -CXXX, it is palmitoylated at Cys-206, rather than prenylated.

Its subcellular location is the membrane. In terms of biological role, acts as a negative regulator of abscisic acid (ABA) responses. This is Rac-like GTP-binding protein ARAC7 (ARAC7) from Arabidopsis thaliana (Mouse-ear cress).